Reading from the N-terminus, the 179-residue chain is Large ribosomal subunit protein uL5 (179 aa).

It belongs to the universal ribosomal protein uL5 family. Part of the 50S ribosomal subunit; part of the 5S rRNA/L5/L18/L25 subcomplex. Contacts the 5S rRNA and the P site tRNA. Forms a bridge to the 30S subunit in the 70S ribosome.

Its function is as follows. This is one of the proteins that bind and probably mediate the attachment of the 5S RNA into the large ribosomal subunit, where it forms part of the central protuberance. In the 70S ribosome it contacts protein S13 of the 30S subunit (bridge B1b), connecting the 2 subunits; this bridge is implicated in subunit movement. Contacts the P site tRNA; the 5S rRNA and some of its associated proteins might help stabilize positioning of ribosome-bound tRNAs. The chain is Large ribosomal subunit protein uL5 from Dehalococcoides mccartyi (strain ATCC BAA-2266 / KCTC 15142 / 195) (Dehalococcoides ethenogenes (strain 195)).